Consider the following 425-residue polypeptide: Polycomb protein esc (425 aa).

The span at 1-10 (MSSDKVKNGN) shows a compositional bias: basic and acidic residues. The interval 1-64 (MSSDKVKNGN…KPKSRAAYKY (64 aa)) is disordered. Residues 11–20 (EPEESEESCG) show a composition bias toward acidic residues. Residue S15 is modified to Phosphoserine. The segment covering 21–42 (DESASYTTNSTTSRSKSPSSST) has biased composition (low complexity). Positions 43–60 (RSKRRGRRSTKSKPKSRA) are enriched in basic residues. WD repeat units lie at residues 71 to 114 (NHGA…GMQL), 126 to 165 (VFYTCAWSYDLKTSSPLLAAAGYRGVIRVIDVEQNEAVGN), 168 to 208 (GHGQ…CIAI), 214 to 253 (GHRDEVLSIDFNMRGDRIVSSGMDHSLKLWCLNTPEFHHK), 284 to 321 (IHRNYVDCVQWFGNFVLSKSCENAIVCWKPGQLHQSFE), 340 to 379 (ECEIWFVRFGFNPWQKVIALGNQQGKVYVWELDPSDPEGA), and 388 to 424 (RSVATVRQIAFSRDASVLVYVCDDATVWRWNRRQTTS).

It belongs to the WD repeat ESC family. As to quaternary structure, component of the polycomb repressive complex 2 (PRC2, also known as the Esc/E(Z) complex), composed of Caf1-55, esc, E(z), Su(z)12, and possibly pho. PRC2 associates with the accessory components Jarid2 and jing to form the PRC2 Jarid2-jing variant (PRC2.2). PRC2 may also associate with Pcl and HDAC1/Rpd3 during early embryogenesis. This complex is distinct from the PRC1 complex, which contains many other PcG proteins like Pc, Ph, Psc, Su(z)2. The two complexes however cooperate and interact together during the first 3 hours of development to establish PcG silencing. Interacts with corto in vitro. Widely expressed.

It localises to the nucleus. Polycomb group (PcG) protein. While PcG proteins are generally required to maintain the transcriptionally repressive state of homeotic genes throughout development, this protein is specifically required during the first 6 hours of embryogenesis to establish the repressed state. Component of the Esc/E(z) complex, which methylates 'Lys-9' and 'Lys-27' residues of histone H3, leading to transcriptional repression of the affected target gene. The Esc/E(z) complex is necessary but not sufficient for the repression of homeotic target genes, suggesting that the recruitment of the distinct PRC1 complex is also required. The chain is Polycomb protein esc (esc) from Drosophila melanogaster (Fruit fly).